The following is an 810-amino-acid chain: Cation/H(+) antiporter 18 (810 aa).

A run of 12 helical transmembrane segments spans residues F29–A49, R59–G76, L91–L111, L126–V146, S157–A177, L193–I213, L223–I243, F277–I297, L314–A334, G343–V363, A374–I394, and F406–A426. At S804 the chain carries Phosphoserine.

The protein belongs to the monovalent cation:proton antiporter 2 (CPA2) transporter (TC 2.A.37) family. CHX (TC 2.A.37.4) subfamily. In terms of tissue distribution, expressed in roots.

The protein localises to the membrane. In terms of biological role, may operate as a cation/H(+) antiporter. This Arabidopsis thaliana (Mouse-ear cress) protein is Cation/H(+) antiporter 18 (CHX18).